The following is a 186-amino-acid chain: Elongation factor P (186 aa).

This sequence belongs to the elongation factor P family.

The protein localises to the cytoplasm. The protein operates within protein biosynthesis; polypeptide chain elongation. Its function is as follows. Involved in peptide bond synthesis. Stimulates efficient translation and peptide-bond synthesis on native or reconstituted 70S ribosomes in vitro. Probably functions indirectly by altering the affinity of the ribosome for aminoacyl-tRNA, thus increasing their reactivity as acceptors for peptidyl transferase. This is Elongation factor P from Prochlorococcus marinus subsp. pastoris (strain CCMP1986 / NIES-2087 / MED4).